The primary structure comprises 270 residues: Tetraspanin-18 (270 aa).

Topologically, residues 1–15 (MRRNCCHVSFASTLK) are cytoplasmic. A helical membrane pass occupies residues 16–36 (ILNFVQAFIGVSIIIYSIWML). The Extracellular segment spans residues 37 to 99 (HEYSRHLPVD…LRSLDLPAPW (63 aa)). A helical membrane pass occupies residues 100–120 (FIYSFMAVGILVCIVTFIGFI). At 121–132 (AAEAINGCCLCF) the chain is on the cytoplasmic side. The helical transmembrane segment at 133-153 (YSILKTLLILLEAALVAYIAI) threads the bilayer. Over 154 to 183 (DRHWEKDLPYDPTGELSSLRAFIEENIDIC) the chain is Extracellular. Residues 184–204 (KWVGIAVVAVQLLSLLLAMVL) traverse the membrane as a helical segment. Over 205–270 (RAMVSTPKPE…NQSPPVNPKG (66 aa)) the chain is Cytoplasmic. Residues 212 to 249 (KPELDEEEDDENPRSRTWDPLLGPQGNQAPAGSSKIEN) form a disordered region. Residues 236 to 249 (QGNQAPAGSSKIEN) show a composition bias toward polar residues. Phosphoserine is present on serine 245.

The protein belongs to the tetraspanin (TM4SF) family. Homodimer. Constituent of tobamovirus replication complex. As to expression, expressed in rosette leaves.

The protein resides in the membrane. It localises to the vacuole membrane. Its function is as follows. May be involved in the regulation of cell differentiation. Functionally, promotes intracellular multiplication of tobamoviruses, probably being a component of the replication complex. In Arabidopsis thaliana (Mouse-ear cress), this protein is Tetraspanin-18 (TOM2AH2).